Reading from the N-terminus, the 136-residue chain is Small ribosomal subunit protein uS8c (136 aa).

It belongs to the universal ribosomal protein uS8 family. As to quaternary structure, part of the 30S ribosomal subunit.

It is found in the plastid. Functionally, one of the primary rRNA binding proteins, it binds directly to 16S rRNA central domain where it helps coordinate assembly of the platform of the 30S subunit. The chain is Small ribosomal subunit protein uS8c (rps8) from Helicosporidium sp. subsp. Simulium jonesii (Green alga).